Here is a 314-residue protein sequence, read N- to C-terminus: uncharacterized protein (314 aa).

Positions 68–91 (EKKKKSSSFEKRDKRRVQLKEKSP) are enriched in basic and acidic residues. 2 disordered regions span residues 68-97 (EKKK…TPRN) and 141-164 (MDVQ…RPAS). The segment covering 144-157 (QSPSTMSTSKNNVR) has biased composition (polar residues).

The protein localises to the mitochondrion. This is an uncharacterized protein from Schizosaccharomyces pombe (strain 972 / ATCC 24843) (Fission yeast).